Here is a 20-residue protein sequence, read N- to C-terminus: Bulb protein (20 aa).

The tract at residues 1–20 (APDVHTRXTQNGLPPGXLPS) is disordered.

This is Bulb protein from Narcissus pseudonarcissus (Daffodil).